A 701-amino-acid chain; its full sequence is Polyribonucleotide nucleotidyltransferase (701 aa).

The Mg(2+) site is built by D485 and D491. Residues 552-611 form the KH domain; that stretch reads PKIFKTTVDPEKIRDIIGPGGKMINKIIAETNVKIDIEPDGRIFVAAPDDISGNRAISMI. Positions 621 to 689 constitute an S1 motif domain; it reads GQFFLGKVTR…KLGRLSLSRK (69 aa).

It belongs to the polyribonucleotide nucleotidyltransferase family. Requires Mg(2+) as cofactor.

Its subcellular location is the cytoplasm. It catalyses the reaction RNA(n+1) + phosphate = RNA(n) + a ribonucleoside 5'-diphosphate. Involved in mRNA degradation. Catalyzes the phosphorolysis of single-stranded polyribonucleotides processively in the 3'- to 5'-direction. The protein is Polyribonucleotide nucleotidyltransferase of Caldicellulosiruptor bescii (strain ATCC BAA-1888 / DSM 6725 / KCTC 15123 / Z-1320) (Anaerocellum thermophilum).